Consider the following 209-residue polypeptide: MGKFTVLNHPLIQHKLTIIRKKDTGTNEFRQIVGEIGGLMVYEMTRDLPLKNVEIETPIGKSTQKELAGKKLVIVPILRAGLGMVDGVLQMIPSAKVGHIGMYRDEETLKPHEYFFKMPPDIEERECIIVDPMLATGGSANMAIGALKKRGAKNIRLAVLVAAPEGVKAVQEANPDVDIYAAEEDEKLMDNGYIYPGLGDAGDRLFGTK.

5-phospho-alpha-D-ribose 1-diphosphate-binding positions include arginine 79, arginine 104, and 131–139; that span reads DPMLATGGS. Uracil is bound by residues isoleucine 194 and 199-201; that span reads GDA. Aspartate 200 contacts 5-phospho-alpha-D-ribose 1-diphosphate.

It belongs to the UPRTase family. Mg(2+) is required as a cofactor.

It catalyses the reaction UMP + diphosphate = 5-phospho-alpha-D-ribose 1-diphosphate + uracil. It participates in pyrimidine metabolism; UMP biosynthesis via salvage pathway; UMP from uracil: step 1/1. Allosterically activated by GTP. Catalyzes the conversion of uracil and 5-phospho-alpha-D-ribose 1-diphosphate (PRPP) to UMP and diphosphate. The polypeptide is Uracil phosphoribosyltransferase (Lactobacillus gasseri (strain ATCC 33323 / DSM 20243 / BCRC 14619 / CIP 102991 / JCM 1131 / KCTC 3163 / NCIMB 11718 / NCTC 13722 / AM63)).